Reading from the N-terminus, the 205-residue chain is Transcriptional regulator GfcR (205 aa).

Belongs to the purine/pyrimidine phosphoribosyltransferase family. GfcR subfamily.

This chain is Transcriptional regulator GfcR, found in Methanococcus maripaludis (strain DSM 14266 / JCM 13030 / NBRC 101832 / S2 / LL).